The following is a 372-amino-acid chain: Peptidyl-prolyl cis-trans isomerase D (372 aa).

The region spanning 10-173 (FFDIQIGQQQ…TDVTIAECGE (164 aa)) is the PPIase cyclophilin-type domain. Positions 174 to 193 (LTGEDYDNADKQTPDATGDP) are disordered. TPR repeat units follow at residues 215–248 (ASEL…LNEF), 268–304 (FTLH…ASAK), and 309–342 (AKVY…APSD).

It belongs to the cyclophilin-type PPIase family. PPIase D subfamily.

The protein localises to the cytoplasm. The catalysed reaction is [protein]-peptidylproline (omega=180) = [protein]-peptidylproline (omega=0). Functionally, PPIases accelerate the folding of proteins. It catalyzes the cis-trans isomerization of proline imidic peptide bonds in oligopeptides. The protein is Peptidyl-prolyl cis-trans isomerase D (cpr6) of Emericella nidulans (strain FGSC A4 / ATCC 38163 / CBS 112.46 / NRRL 194 / M139) (Aspergillus nidulans).